A 202-amino-acid chain; its full sequence is Nitrophorin-3 (202 aa).

The signal sequence occupies residues 1-23 (MEPYSALLAVTILCLTSTMGVSG). 2 cysteine pairs are disulfide-bonded: cysteine 25-cysteine 144 and cysteine 62-cysteine 193. Histidine 80 contacts heme.

It belongs to the calycin superfamily. Nitrophorin family. As to quaternary structure, interacts weakly with host coagulation factor IX (F9) (inactive and activated) in the presence of Ca(2+). In terms of tissue distribution, salivary gland (at protein level).

The protein resides in the secreted. Its function is as follows. Heme-based protein that deliver nitric oxide gas (NO) to the victim while feeding, resulting in vasodilation and inhibition of platelet aggregation. Reversibly binds nitric oxide (NO). Also binds tightly to histamine, which is released by the host to induce wound healing. Exhibits weak anticoagulant activity. This chain is Nitrophorin-3, found in Rhodnius prolixus (Triatomid bug).